The chain runs to 203 residues: Small ribosomal subunit protein uS4 (203 aa).

The region spanning 93 to 156 is the S4 RNA-binding domain; it reads RRLDNVVYRL…MKVPAILEAV (64 aa).

It belongs to the universal ribosomal protein uS4 family. Part of the 30S ribosomal subunit. Contacts protein S5. The interaction surface between S4 and S5 is involved in control of translational fidelity.

One of the primary rRNA binding proteins, it binds directly to 16S rRNA where it nucleates assembly of the body of the 30S subunit. Its function is as follows. With S5 and S12 plays an important role in translational accuracy. This is Small ribosomal subunit protein uS4 from Streptococcus pyogenes serotype M49 (strain NZ131).